We begin with the raw amino-acid sequence, 242 residues long: Probable transcriptional regulatory protein NMB1648 (242 aa).

The protein belongs to the TACO1 family.

Its subcellular location is the cytoplasm. The protein is Probable transcriptional regulatory protein NMB1648 of Neisseria meningitidis serogroup B (strain ATCC BAA-335 / MC58).